A 91-amino-acid polypeptide reads, in one-letter code: Small ribosomal subunit protein eS24 (91 aa).

The segment at 51–91 (QRRKDAAAHKEAYNAMPEAERRHLNSEKYANRKAEVSYKHR) is disordered.

This sequence belongs to the eukaryotic ribosomal protein eS24 family.

The polypeptide is Small ribosomal subunit protein eS24 (Caenorhabditis elegans).